We begin with the raw amino-acid sequence, 776 residues long: Transcription activator of gluconeogenesis HCAG_03671 (776 aa).

The segment at 1–70 (MTASTQNGSP…NAKDPLRPRR (70 aa)) is disordered. Composition is skewed to polar residues over residues 21–41 (NQES…QSPA) and 50–60 (ENGQKHTSTAA). Residues 77-105 (CFACQRAHLTCGDERPCQRCIKRGLQDAC) constitute a DNA-binding region (zn(2)-C6 fungal-type). 5 disordered regions span residues 140–159 (RTNA…KDSR), 179–248 (TQAK…PFGA), 286–351 (GAGD…NIYN), 556–593 (NLNV…GGGG), and 651–726 (REAQ…SPKQ). Positions 142–155 (NASQQQNGPNSNSN) are enriched in low complexity. A compositionally biased stretch (polar residues) spans 195 to 217 (MQDTSINPSAFQAPSPTSTPNFD). The span at 218-229 (LSSNPPNRNLSS) shows a compositional bias: low complexity. Polar residues-rich tracts occupy residues 230–244 (AMTQ…QTQD), 292–322 (PSDS…NTQP), 334–351 (WNPS…NIYN), and 557–576 (LNVN…TPRN). Over residues 657–669 (GPDGKGGGGGGGD) the composition is skewed to gly residues. A compositionally biased stretch (low complexity) spans 670-714 (VATTAATTSTSTSNGANSSGHANANRNNTNPNNSSPPSSSSAAAA).

This sequence belongs to the ERT1/acuK family.

Its subcellular location is the nucleus. In terms of biological role, transcription factor which regulates nonfermentable carbon utilization. Activator of gluconeogenetic genes. The chain is Transcription activator of gluconeogenesis HCAG_03671 from Ajellomyces capsulatus (strain NAm1 / WU24) (Darling's disease fungus).